Reading from the N-terminus, the 722-residue chain is Solute carrier organic anion transporter family member 4A1 (722 aa).

The disordered stretch occupies residues Met1–Leu52. The Cytoplasmic portion of the chain corresponds to Met1 to Lys103. Residue Ser34 is modified to Phosphoserine. Thr37 bears the Phosphothreonine mark. 4 positions are modified to phosphoserine: Ser40, Ser43, Ser46, and Ser50. The helical transmembrane segment at Gly104 to Ile124 threads the bilayer. At Asn125–Gly143 the chain is on the extracellular side. The chain crosses the membrane as a helical span at residues Leu144–Gly164. Residues Gly165–Pro170 are Cytoplasmic-facing. The chain crosses the membrane as a helical span at residues Arg171–Gly195. Residues Arg196–Gly222 are Extracellular-facing. Residues Leu223–Asp253 form a helical membrane-spanning segment. Over Glu254–Ala272 the chain is Cytoplasmic. The chain crosses the membrane as a helical span at residues Ile273–Met293. Residues Gly294–Val307 are Extracellular-facing. Residues Gly308–Pro332 form a helical membrane-spanning segment. Residues Arg333–Leu378 are Cytoplasmic-facing. A helical membrane pass occupies residues Leu379–Thr400. Residues Gly401–Glu420 lie on the Extracellular side of the membrane. A helical transmembrane segment spans residues Ala421–Val444. Over Asn445 to Arg448 the chain is Cytoplasmic. Residues Leu449–Val471 traverse the membrane as a helical segment. The Extracellular segment spans residues Phe472–Leu580. Positions Leu498 to Pro555 constitute a Kazal-like domain. Asn499 carries N-linked (GlcNAc...) asparagine glycosylation. Intrachain disulfides connect Cys504-Cys534, Cys510-Cys530, and Cys519-Cys553. N-linked (GlcNAc...) asparagine glycosylation is present at Asn557. Residues Leu581–Leu603 form a helical membrane-spanning segment. Topologically, residues Arg604 to Ser612 are cytoplasmic. Residues Phe613–Ile638 form a helical membrane-spanning segment. Over Asp639–Gly671 the chain is Extracellular. A helical transmembrane segment spans residues Leu672–Tyr689. At Lys690–Val722 the chain is on the cytoplasmic side. Residues Leu703 to Val722 form a disordered region.

Belongs to the organo anion transporter (TC 2.A.60) family. In terms of tissue distribution, widely expressed. Expressed in placental trophoblasts. Expressed in pancreas, kidney, skeletal muscle, liver, lung, brain, heart, colon, small intestine, ovary, testis, prostate, thymus and spleen. In testis, primarily localized to Leydig cells.

The protein resides in the cell membrane. It catalyses the reaction 3,3',5-triiodo-L-thyronine(out) + L-glutamate(in) = 3,3',5-triiodo-L-thyronine(in) + L-glutamate(out). It carries out the reaction L-thyroxine(out) + L-glutamate(in) = L-thyroxine(in) + L-glutamate(out). The enzyme catalyses estrone 3-sulfate(out) + L-glutamate(in) = estrone 3-sulfate(in) + L-glutamate(out). The catalysed reaction is taurocholate(out) + L-glutamate(in) = taurocholate(in) + L-glutamate(out). It catalyses the reaction 3,3',5-triiodo-L-thyronine(out) = 3,3',5-triiodo-L-thyronine(in). It carries out the reaction L-thyroxine(out) = L-thyroxine(in). The enzyme catalyses 3,3',5'-triiodo-L-thyronine(out) = 3,3',5'-triiodo-L-thyronine(in). The catalysed reaction is estrone 3-sulfate(out) = estrone 3-sulfate(in). It catalyses the reaction 17beta-estradiol 17-O-(beta-D-glucuronate)(out) = 17beta-estradiol 17-O-(beta-D-glucuronate)(in). It carries out the reaction taurocholate(out) = taurocholate(in). The enzyme catalyses prostaglandin E2(out) = prostaglandin E2(in). Functionally, organic anion antiporter with apparent broad substrate specificity. Recognizes various substrates including thyroid hormones 3,3',5-triiodo-L-thyronine (T3), L-thyroxine (T4) and 3,3',5'-triiodo-L-thyronine (rT3), conjugated steroids such as estrone 3-sulfate and estradiol 17-beta glucuronide, bile acids such as taurocholate and prostanoids such as prostaglandin E2, likely operating in a tissue-specific manner. May be involved in uptake of metabolites from the circulation into organs such as kidney, liver or placenta. Possibly drives the selective transport of thyroid hormones and estrogens coupled to an outward glutamate gradient across the microvillous membrane of the placenta. The transport mechanism, its electrogenicity and potential tissue-specific counterions remain to be elucidated. The sequence is that of Solute carrier organic anion transporter family member 4A1 (SLCO4A1) from Homo sapiens (Human).